A 115-amino-acid polypeptide reads, in one-letter code: RRPARSGGDGGAPMTTGSRVVKYYDGSRRGSRRGLSTSGRSVKKDPAGLRDSLLSEDDRSAAAAPPPPPVHPVRDQLSSQLVRPSRGLGAYRTMSVFGSGWRPCRAAASHVRGAR.

Residues 1–86 (RRPARSGGDG…LSSQLVRPSR (86 aa)) form a disordered region.

This is an uncharacterized protein from Homo sapiens (Human).